Here is a 145-residue protein sequence, read N- to C-terminus: Flagellar assembly factor FliW (145 aa).

It belongs to the FliW family. As to quaternary structure, interacts with translational regulator CsrA and flagellin(s).

The protein localises to the cytoplasm. Acts as an anti-CsrA protein, binds CsrA and prevents it from repressing translation of its target genes, one of which is flagellin. Binds to flagellin and participates in the assembly of the flagellum. This Exiguobacterium sp. (strain ATCC BAA-1283 / AT1b) protein is Flagellar assembly factor FliW.